Reading from the N-terminus, the 522-residue chain is Glycerol kinase (522 aa).

Substrate is bound at residue threonine 15. Arginine 19 is an ATP binding site. Residues 89–90, tyrosine 143, and 255–256 contribute to the substrate site; these read RE and DQ. ATP contacts are provided by residues threonine 276, glycine 321, and 430-434; that span reads GATAN.

Belongs to the FGGY kinase family. Highly expressed in germinating seeds and senescent leaves, and at lower levels in roots, leaves, flowers and siliques.

The protein localises to the cytoplasm. It localises to the cytosol. It catalyses the reaction glycerol + ATP = sn-glycerol 3-phosphate + ADP + H(+). The protein operates within polyol metabolism; glycerol degradation via glycerol kinase pathway; sn-glycerol 3-phosphate from glycerol: step 1/1. In terms of biological role, key enzyme in the regulation of glycerol uptake and metabolism. Required for resistance to nonhost Pseudomonas bacteria and to the pathogenic fungus B.cinerea. This is Glycerol kinase (GLPK) from Arabidopsis thaliana (Mouse-ear cress).